We begin with the raw amino-acid sequence, 62 residues long: Omega-lycotoxin-Am1e (62 aa).

Residues Glu1–Arg15 constitute a propeptide that is removed on maturation. Intrachain disulfides connect Cys19–Cys34, Cys26–Cys39, Cys33–Cys59, and Cys41–Cys57.

It belongs to the neurotoxin omega-lctx family. As to expression, expressed by the venom gland.

The protein localises to the secreted. Its function is as follows. Modulates Cav2.1/CACNA1A voltage-gated calcium channels (P/Q-type currents) in rat cerebellar Purkinje cells and hippocampal CA1-CA3 neurons. At saturating concentrations (&gt;10 nM) decelerates activation kinetics and slightly increases peak amplitude without affecting deactivation kinetics. In vivo, does not cause death when intravenously injected into mice. In rat models, through its activity on Cav2.1/CACNA1A, has an ameliorative effect on memory defects provoked by hyperstimulation of N-methyl-D-aspartate receptors (NMDARs) in the hippocampus. The sequence is that of Omega-lycotoxin-Am1e from Alopecosa marikovskyi (Wolf spider).